Consider the following 157-residue polypeptide: Tripartite terminase subunit 2 (157 aa).

The tract at residues 1–69 is disordered; sequence MSWAKQRVPF…DGEDGHALPD (69 aa). Positions 11–27 are enriched in acidic residues; the sequence is LDDDDGEEENDVQDDVD.

Belongs to the herpesviridae TRM2 protein family. As to quaternary structure, associates with TRM1 and TRM3 to form the tripartite terminase complex.

It is found in the host nucleus. Functionally, component of the molecular motor that translocates viral genomic DNA in empty capsid during DNA packaging. Forms a tripartite terminase complex together with TRM1 and TRM3 in the host cytoplasm. Once the complex reaches the host nucleus, it interacts with the capsid portal vertex. This portal forms a ring in which genomic DNA is translocated into the capsid. The sequence is that of Tripartite terminase subunit 2 from Homo sapiens (Human).